Reading from the N-terminus, the 1279-residue chain is Amylopullulanase (1279 aa).

An N-terminal signal peptide occupies residues Met1 to Ala35. The Ca(2+) site is built by Asp248, Asn250, Asp288, Asp343, Asn401, Asp403, Asn406, Asp407, Gly452, and Asp454. Residues His527 and Arg627 each contribute to the substrate site. The active-site Nucleophile is Asp629. Catalysis depends on Glu658, which acts as the Proton donor. Substrate is bound by residues His734–Asp735, Asp794, and Arg798. 2 consecutive Fibronectin type-III domains span residues Ala930–Ile1022 and Lys1158–Ile1252.

It belongs to the glycosyl hydrolase 13 family. Ca(2+) serves as cofactor.

The enzyme catalyses Endohydrolysis of (1-&gt;4)-alpha-D-glucosidic linkages in polysaccharides containing three or more (1-&gt;4)-alpha-linked D-glucose units.. It catalyses the reaction Hydrolysis of (1-&gt;6)-alpha-D-glucosidic linkages in pullulan, amylopectin and glycogen, and in the alpha- and beta-limit dextrins of amylopectin and glycogen.. The polypeptide is Amylopullulanase (apu) (Thermoanaerobacterium saccharolyticum).